A 423-amino-acid polypeptide reads, in one-letter code: Putative competence-damage inducible protein (423 aa).

It belongs to the CinA family.

This Streptococcus pyogenes serotype M49 (strain NZ131) protein is Putative competence-damage inducible protein.